A 704-amino-acid chain; its full sequence is MAKITKTFQYGKHTVTLETGEIARQAGGAVIVKFDDTVLLVTAVAAKSAREGQDFFPLTVDYQEKFYAGGRIPGGFFKREGRATEKETLISRLIDRPIRPLFPEDYKNEVQIIATVMSMNPDIDGDIAALIGASAALSLAGTPFKGPIGAAKVGYKNGEYILNPTVTELKDSQLELVVAGTANAVLMVESEAELLSEEVMLGAVTFGHREMQKVINVINELTVEAGTKPSDWVAPAKNEGMIAALKEAVGDQLASAFQVRDKLQRRDAISAIKKDVLGALAPRATIEGWAAGDLAKEFGELEYQTMRGSVLSSKVRIDGRALDTVRPISAKAGVLPRTHGSALFTRGETQAIVITTLGTARDGQVIDAVSGEYKENFLFHYNFPPYSVGECGRFGAPKRREIGHGRLAKRGVLAVMPTLEEFPYTIRVVSEITESNGSSSMASVCGSSLALMDAGVPIKAPVAGIAMGLVKEGNDFVVLSDILGDEDHLGDMDFKVAGTAEGVSALQMDIKIEGITEEIMKQALQQAKAGRLHILGEMAHALTTPRQELSDYAPRLLTIKIHPDKIREVIGKGGSTIQAITKETGTQIDIQDDGTIIIASVNAIAAQAAKSRIEQITSDVEPGRIYEGKVAKIMDFGAFVTILPGKDGLVHVSQISSERVEKVGDKLKEGDLVRVKVLEVDKQGRIRLSIKAVEEGEGVQASAE.

The Mg(2+) site is built by Asp-487 and Asp-493. Residues 554 to 613 (PRLLTIKIHPDKIREVIGKGGSTIQAITKETGTQIDIQDDGTIIIASVNAIAAQAAKSRI) form the KH domain. Residues 623–691 (GRIYEGKVAK…KQGRIRLSIK (69 aa)) form the S1 motif domain.

It belongs to the polyribonucleotide nucleotidyltransferase family. In terms of assembly, component of the RNA degradosome, which is a multiprotein complex involved in RNA processing and mRNA degradation. Mg(2+) serves as cofactor.

It is found in the cytoplasm. The enzyme catalyses RNA(n+1) + phosphate = RNA(n) + a ribonucleoside 5'-diphosphate. Involved in mRNA degradation. Catalyzes the phosphorolysis of single-stranded polyribonucleotides processively in the 3'- to 5'-direction. In Xanthomonas euvesicatoria pv. vesicatoria (strain 85-10) (Xanthomonas campestris pv. vesicatoria), this protein is Polyribonucleotide nucleotidyltransferase.